We begin with the raw amino-acid sequence, 62 residues long: Defensin-like protein A (62 aa).

The N-terminal stretch at 1-26 is a signal peptide; it reads MRCVVLFMVSCLLIVLLINHFEEVEA. A disulfide bridge links C42 with C52.

Belongs to the DEFL family.

It localises to the secreted. Its function is as follows. Truncated and inactivated form of SCRA, a protein involved in male-mediated self-incompatibility when active. Most A.thaliana cultivars contain such an inactive form and thus, are self-fertiles. This is Defensin-like protein A (SCRA) from Arabidopsis thaliana (Mouse-ear cress).